The primary structure comprises 324 residues: MFNFANFYQLIAQDTVLQPWLNTLPQQLTDWQNAEHGDIERWIKALKKIPEGCADNIDLKSSVTLSNNTPLIDGERKKLENLLQTFHPWRKGPFTVHDIHIDTEWRSDWKWDRLLPHITPLKNRSVLDVGCGNGYHMWRMLGEDARLCVGIDPSHLFLIQFEAIRKLMGNDQRAHLLPLGIEQLPELNAFDTVFSMGVLYHRRSPLDHLIQLKNQLVAGGELVLETLVIDGDENAVLMPVDRYAQMRNVYFFPSARALKVWLESVGFVDVKIVDECVTTTGEQRSTEWMKHNSLPEYLDPNDSTKTIEGHPAPKRAILIAKKPD.

Carboxy-S-adenosyl-L-methionine-binding positions include Lys91, Trp105, Lys110, Gly130, Asp152–Ser154, Ile181–Glu182, Met196, Tyr200, and Arg315.

The protein belongs to the class I-like SAM-binding methyltransferase superfamily. CmoB family. Homotetramer.

The enzyme catalyses carboxy-S-adenosyl-L-methionine + 5-hydroxyuridine(34) in tRNA = 5-carboxymethoxyuridine(34) in tRNA + S-adenosyl-L-homocysteine + H(+). In terms of biological role, catalyzes carboxymethyl transfer from carboxy-S-adenosyl-L-methionine (Cx-SAM) to 5-hydroxyuridine (ho5U) to form 5-carboxymethoxyuridine (cmo5U) at position 34 in tRNAs. In Aliivibrio fischeri (strain ATCC 700601 / ES114) (Vibrio fischeri), this protein is tRNA U34 carboxymethyltransferase.